A 510-amino-acid polypeptide reads, in one-letter code: Replication factor C large subunit (510 aa).

ATP is bound at residue 48-55 (GPPGTGKT). Residues 459–510 (MESMLERKREESEVEEEAKEIEEAVEKAEEEEEREEKKKEGGGEQRTLDAFF) form a disordered region. A compositionally biased stretch (basic and acidic residues) spans 493–510 (EEKKKEGGGEQRTLDAFF).

Belongs to the activator 1 small subunits family. RfcL subfamily. Heteromultimer composed of small subunits (RfcS) and large subunits (RfcL).

Part of the RFC clamp loader complex which loads the PCNA sliding clamp onto DNA. The sequence is that of Replication factor C large subunit from Methanopyrus kandleri (strain AV19 / DSM 6324 / JCM 9639 / NBRC 100938).